Consider the following 343-residue polypeptide: Protein RecA (343 aa).

ATP is bound at residue 65 to 72 (GPESSGKT).

This sequence belongs to the RecA family.

The protein resides in the cytoplasm. In terms of biological role, can catalyze the hydrolysis of ATP in the presence of single-stranded DNA, the ATP-dependent uptake of single-stranded DNA by duplex DNA, and the ATP-dependent hybridization of homologous single-stranded DNAs. It interacts with LexA causing its activation and leading to its autocatalytic cleavage. This chain is Protein RecA, found in Xanthomonas campestris pv. campestris (strain 8004).